A 450-amino-acid polypeptide reads, in one-letter code: FERM domain-containing protein 8 (450 aa).

Residues 28–373 (MDVIVYLIND…YCIELSQTTE (346 aa)) enclose the FERM domain.

The protein resides in the cytoplasm. It is found in the cytosol. It localises to the cell membrane. Functionally, promotes the cell surface stability of RHBDF1 and RHBDF2 and prevents their degradation via the endolysosomal pathway. By acting on RHBDF proteins, involved in ADAM17-mediated ligand shedding. May negatively regulate Wnt signaling. The polypeptide is FERM domain-containing protein 8 (frmd8) (Xenopus tropicalis (Western clawed frog)).